A 406-amino-acid chain; its full sequence is Imidazolonepropionase (406 aa).

The Fe(3+) site is built by His65 and His67. Residues His65 and His67 each contribute to the Zn(2+) site. Positions 74, 137, and 170 each coordinate 4-imidazolone-5-propanoate. Tyr137 is a binding site for N-formimidoyl-L-glutamate. Position 235 (His235) interacts with Fe(3+). His235 provides a ligand contact to Zn(2+). Position 238 (Gln238) interacts with 4-imidazolone-5-propanoate. Asp310 serves as a coordination point for Fe(3+). Asp310 serves as a coordination point for Zn(2+). N-formimidoyl-L-glutamate-binding residues include Asn312 and Gly314. Thr315 is a binding site for 4-imidazolone-5-propanoate.

The protein belongs to the metallo-dependent hydrolases superfamily. HutI family. It depends on Zn(2+) as a cofactor. Requires Fe(3+) as cofactor.

The protein resides in the cytoplasm. It carries out the reaction 4-imidazolone-5-propanoate + H2O = N-formimidoyl-L-glutamate. It participates in amino-acid degradation; L-histidine degradation into L-glutamate; N-formimidoyl-L-glutamate from L-histidine: step 3/3. Its function is as follows. Catalyzes the hydrolytic cleavage of the carbon-nitrogen bond in imidazolone-5-propanoate to yield N-formimidoyl-L-glutamate. It is the third step in the universal histidine degradation pathway. The polypeptide is Imidazolonepropionase (Vibrio vulnificus (strain YJ016)).